The sequence spans 128 residues: Arsenic resistance transcriptional regulator ArsR1 (128 aa).

Residues Met11–Asn103 form the HTH arsR-type domain. Cys43 and Cys45 together coordinate arsenite. The H-T-H motif DNA-binding region spans Val44–Glu67.

As to quaternary structure, homodimer.

It localises to the cytoplasm. In terms of biological role, binds arsenite and regulates the expression of arsenic efflux pumps. In vitro, also binds antimony and bismuth, but not arsenate. This chain is Arsenic resistance transcriptional regulator ArsR1, found in Pseudomonas putida (strain ATCC 47054 / DSM 6125 / CFBP 8728 / NCIMB 11950 / KT2440).